Reading from the N-terminus, the 203-residue chain is Small ribosomal subunit protein uS7 (203 aa).

The tract at residues 1-21 (MSSEAPEPDAPASTDDERVSA) is disordered.

It belongs to the universal ribosomal protein uS7 family. As to quaternary structure, part of the 30S ribosomal subunit.

Functionally, one of the primary rRNA binding proteins, it binds directly to 16S rRNA where it nucleates assembly of the head domain of the 30S subunit. Is located at the subunit interface close to the decoding center. This chain is Small ribosomal subunit protein uS7, found in Natronomonas pharaonis (strain ATCC 35678 / DSM 2160 / CIP 103997 / JCM 8858 / NBRC 14720 / NCIMB 2260 / Gabara) (Halobacterium pharaonis).